A 277-amino-acid chain; its full sequence is Shikimate dehydrogenase (NADP(+)) (277 aa).

Shikimate is bound by residues 15–17 and threonine 62; that span reads SLS. Lysine 66 serves as the catalytic Proton acceptor. Residues asparagine 87 and aspartate 102 each contribute to the shikimate site. NADP(+)-binding positions include 127–131, 151–156, and isoleucine 219; these read GAGGA and NRTVDK. Tyrosine 221 provides a ligand contact to shikimate. Glycine 242 provides a ligand contact to NADP(+).

It belongs to the shikimate dehydrogenase family. As to quaternary structure, homodimer.

The enzyme catalyses shikimate + NADP(+) = 3-dehydroshikimate + NADPH + H(+). The protein operates within metabolic intermediate biosynthesis; chorismate biosynthesis; chorismate from D-erythrose 4-phosphate and phosphoenolpyruvate: step 4/7. Functionally, involved in the biosynthesis of the chorismate, which leads to the biosynthesis of aromatic amino acids. Catalyzes the reversible NADPH linked reduction of 3-dehydroshikimate (DHSA) to yield shikimate (SA). This Bacillus cereus (strain AH187) protein is Shikimate dehydrogenase (NADP(+)).